Reading from the N-terminus, the 329-residue chain is Sideroflexin (329 aa).

5 helical membrane passes run 95 to 115 (AFLP…ASIG), 147 to 167 (ILEA…GLGW), 183 to 203 (LRMM…VLIM), 238 to 258 (FSRA…MGLF), and 274 to 294 (LNLA…IALF).

The protein belongs to the sideroflexin family.

It localises to the mitochondrion membrane. Its function is as follows. Mitochondrial amino-acid transporter that mediates transport of serine into mitochondria. This Dictyostelium discoideum (Social amoeba) protein is Sideroflexin.